Reading from the N-terminus, the 31-residue chain is Sarcolipin (31 aa).

Topologically, residues 1–7 (MERSTQE) are cytoplasmic. Residues 8–26 (LFINFTVVLITVLLMWLLV) traverse the membrane as a helical segment. Topologically, residues 27–31 (RSYQY) are lumenal.

This sequence belongs to the sarcolipin family. As to quaternary structure, homooligomer. Can also form heterooligomers with other sarcoplasmic/endoplasmic reticulum calcium ATPase (SERCA) regulators ARLN, ERLN, PLN and STRIT1/DWORF. Monomer. Interacts with calcium ATPase ATP2A1/SERCA1. Interacts as a monomer with ATP2A2/SERCA2; the interaction decreases ATP2A2 Ca(2+) affinity. Interacts with VMP1; VMP1 competes with PLN and SLN to prevent them from forming an inhibitory complex with ATP2A2.

The protein resides in the sarcoplasmic reticulum membrane. Its subcellular location is the endoplasmic reticulum membrane. Its function is as follows. Reversibly inhibits the activity of ATP2A1/SERCA1 and ATP2A2/SERCA2 in sarcoplasmic reticulum by decreasing the apparent affinity of the ATPase for Ca(2+). Also inhibits the activity of ATP2A3/SERCA3. Modulates calcium re-uptake during muscle relaxation and plays an important role in calcium homeostasis in muscle. Required for muscle-based, non-shivering thermogenesis. This chain is Sarcolipin (Sln), found in Rattus norvegicus (Rat).